We begin with the raw amino-acid sequence, 88 residues long: DNA-directed RNA polymerase subunit omega (88 aa).

This sequence belongs to the RNA polymerase subunit omega family. In terms of assembly, the RNAP catalytic core consists of 2 alpha, 1 beta, 1 beta' and 1 omega subunit. When a sigma factor is associated with the core the holoenzyme is formed, which can initiate transcription.

The catalysed reaction is RNA(n) + a ribonucleoside 5'-triphosphate = RNA(n+1) + diphosphate. Promotes RNA polymerase assembly. Latches the N- and C-terminal regions of the beta' subunit thereby facilitating its interaction with the beta and alpha subunits. In Haemophilus influenzae (strain PittEE), this protein is DNA-directed RNA polymerase subunit omega.